The sequence spans 182 residues: uncharacterized protein (182 aa).

A compositionally biased stretch (polar residues) spans 1–23; the sequence is MILSDQNFLQTQWKEPQTAQSKN. The disordered stretch occupies residues 1–33; it reads MILSDQNFLQTQWKEPQTAQSKNTESKCEFHGN.

It belongs to the peptidase M24 family.

This is an uncharacterized protein from Caenorhabditis elegans.